The chain runs to 381 residues: Layilin (381 aa).

Positions 1–24 (MQPGAALQAMLLAVLLAKPRDSKG) are cleaved as a signal peptide. Topologically, residues 25–235 (RLLSASDLDP…ERREAALNLA (211 aa)) are extracellular. Residues 45–185 (TRRPCYKVIY…CNMKNNFICK (141 aa)) form the C-type lectin domain. 2 disulfide bridges follow: Cys-71–Cys-184 and Cys-150–Cys-176. A glycan (N-linked (GlcNAc...) asparagine) is linked at Asn-117. Residues 236–256 (YILIPSIPLFLLLVVTSAVCW) traverse the membrane as a helical segment. Residues 257–381 (VWICRRKREQ…SGWVENEIYY (125 aa)) are Cytoplasmic-facing. Ser-286 and Ser-299 each carry phosphoserine. Positions 330 to 374 (DYENIAVNPSESGFVTLASMESGFVTNDIYEFSPDRMGRSKESGW) are interaction with NF2. The segment at 337-381 (NPSESGFVTLASMESGFVTNDIYEFSPDRMGRSKESGWVENEIYY) is interaction with TLN1. 5 repeat units span residues 340–344 (ESGFV), 350–354 (ESGFV), 356–359 (NDIY), 371–375 (ESGWV), and 377–380 (NEIY). Residues 340–375 (ESGFVTLASMESGFVTNDIYEFSPDRMGRSKESGWV) form a 3 X 5 AA repeats of E-S-G-X-V region. A 2 X 4 AA repeats of N-X-I-Y region spans residues 356-380 (NDIYEFSPDRMGRSKESGWVENEIY).

In terms of assembly, interacts with TLN1. Interacts with NF2 and RDX.

It localises to the membrane. Receptor for hyaluronate. The polypeptide is Layilin (Layn) (Mus musculus (Mouse)).